The sequence spans 137 residues: Protein MGF 110-7L (137 aa).

The first 20 residues, 1–20, serve as a signal peptide directing secretion; that stretch reads MLVIILGIIGLLASSNLVSS. Asparagine 69, asparagine 70, and asparagine 105 each carry an N-linked (GlcNAc...) asparagine; by host glycan.

Belongs to the asfivirus MGF 110 family.

Its function is as follows. Plays a role in virus cell tropism, and may be required for efficient virus replication in macrophages. This African swine fever virus (isolate Warthog/Namibia/Wart80/1980) (ASFV) protein is Protein MGF 110-7L.